A 130-amino-acid polypeptide reads, in one-letter code: Small ribosomal subunit protein uS11 (130 aa).

This sequence belongs to the universal ribosomal protein uS11 family. As to quaternary structure, part of the 30S ribosomal subunit. Interacts with proteins S7 and S18. Binds to IF-3.

Its function is as follows. Located on the platform of the 30S subunit, it bridges several disparate RNA helices of the 16S rRNA. Forms part of the Shine-Dalgarno cleft in the 70S ribosome. This is Small ribosomal subunit protein uS11 from Latilactobacillus sakei subsp. sakei (strain 23K) (Lactobacillus sakei subsp. sakei).